Here is a 71-residue protein sequence, read N- to C-terminus: U3-agatoxin-Ao1a (71 aa).

An N-terminal signal peptide occupies residues 1–20; the sequence is MKAVIFFCLLSVMVFTVIEA. A propeptide spanning residues 21–33 is cleaved from the precursor; it reads VKEEGTKPAEAAR. 4 cysteine pairs are disulfide-bonded: C35/C51, C42/C56, C50/C66, and C58/C64. At S70 the chain carries Serine amide.

Belongs to the neurotoxin 07 (Beta/delta-agtx) family. 01 (aga-2) subfamily. In terms of tissue distribution, expressed by the venom gland.

Its subcellular location is the secreted. Its function is as follows. Insecticidal neurotoxin that modulates the insect Nav channel (DmNaV1/tipE (para/tipE)) in a unique manner, with both the activation and inactivation processes being affected. The voltage dependence of activation is shifted toward more hyperpolarized potentials (analogous to site 4 toxins) and a non-inactivating persistent sodium current is induced (site 3-like action). Interestingly, both effects take place in a voltage-dependent manner, producing a bell-shaped curve between -80 and 0 mV. Compared to beta/delta-agatoxin-1 to -3, this toxin appears to affect the insect sodium channel only weakly. This is U3-agatoxin-Ao1a from Agelena orientalis (Funnel-web spider).